Consider the following 240-residue polypeptide: Cysteine-rich venom protein catrin (240 aa).

The signal sequence occupies residues 1–19 (MIAFIVLPILAAVLQQSSG). One can recognise an SCP domain in the interval 38 to 166 (VDLHNFLRRS…KYSYFYVCQY (129 aa)). Cystine bridges form between Cys-75/Cys-153, Cys-92/Cys-167, Cys-148/Cys-164, Cys-186/Cys-193, Cys-189/Cys-198, Cys-202/Cys-235, Cys-211/Cys-229, and Cys-220/Cys-233. In terms of domain architecture, ShKT spans 202 to 235 (CTKEDKYTNCKSLVQQAGCQDKQMQSDCPAICFC).

This sequence belongs to the CRISP family. In terms of tissue distribution, expressed by the venom gland.

It localises to the secreted. Catrin-2 weakly blocks contraction of smooth muscle elicited by high potassium-induced depolarization, but does not block caffeine-stimulated contraction. Catrin-1 has no significant effect. May target voltage-gated calcium channels on smooth muscle. The polypeptide is Cysteine-rich venom protein catrin (Crotalus atrox (Western diamondback rattlesnake)).